Consider the following 223-residue polypeptide: Cuticular glutathione peroxidase (223 aa).

The signal sequence occupies residues 1-19; that stretch reads MSAQLLILSHVVLLQLIVA. N39 carries an N-linked (GlcNAc...) asparagine glycan. Residue C74 is part of the active site. N-linked (GlcNAc...) asparagine glycosylation occurs at N92.

It belongs to the glutathione peroxidase family. As to quaternary structure, homotetramer.

The protein resides in the secreted. The catalysed reaction is 2 glutathione + H2O2 = glutathione disulfide + 2 H2O. Could inhibit the oxidative burst of leukocytes and neutralize the secondary products of lipid peroxidation, thus providing the resistance of these parasites to immune effector mechanisms and their persistence in the mammalian host. It may also be involved in the formation of cross-linking residues such as dityrosine, trityrosine and isotrityrosine identified in cuticular collagen. Highly cross-linked external cortex may also serve to protect the parasite from immune attack. In Wuchereria bancrofti, this protein is Cuticular glutathione peroxidase.